The following is a 398-amino-acid chain: MKYAVLIGDGMADYPIDKLGGKTILQAAQTPAMDYIAAHGKIGLAKTIPDGLPAGSDVANMSILGYDPAVYYSGRAPLEAASMGVALASDDVAFRCNLVTIEHGRIKDYSAGHISSEEARILIETLDAELGNEELSFYPGISYRHLLIAKDNLGAETECTPPHDITGKKIEEYLPGGKEGDFFSDLIKKSMIVLELHPVNLRRIEEGKNPANSIWVWGQGSAPKFTPFRELYEKTGAVISAVDLLKGIGVYAGMDVIEVQGATGYLDTNYEGKASAAIEVLKTRDLVFVHVEAPDEAGHEGSIDKKLKAVEDFDSRIVAPILKHAKTSDEPFTILVLPDHPTPISIKTHARDPVPFAVYRTDKTDSDSAEAFDEESAKKGSLGLVKASDLIGILVKAK.

It belongs to the BPG-independent phosphoglycerate mutase family. A-PGAM subfamily.

It catalyses the reaction (2R)-2-phosphoglycerate = (2R)-3-phosphoglycerate. It participates in carbohydrate degradation; glycolysis; pyruvate from D-glyceraldehyde 3-phosphate: step 3/5. Functionally, catalyzes the interconversion of 2-phosphoglycerate and 3-phosphoglycerate. The sequence is that of 2,3-bisphosphoglycerate-independent phosphoglycerate mutase from Methanosarcina barkeri (strain Fusaro / DSM 804).